A 319-amino-acid polypeptide reads, in one-letter code: ATP-dependent 6-phosphofructokinase (319 aa).

ATP is bound by residues Gly-11, 72 to 73 (RS), and 102 to 105 (GDGS). Residue Asp-103 participates in Mg(2+) binding. Residue 126–128 (TID) coordinates substrate. Catalysis depends on Asp-128, which acts as the Proton acceptor. Arg-155 contributes to the ADP binding site. Residues Arg-163 and 170-172 (MGR) each bind substrate. 186–188 (GAE) provides a ligand contact to ADP. Substrate is bound by residues Glu-223, Arg-245, and 251 to 254 (HTQR).

Belongs to the phosphofructokinase type A (PFKA) family. ATP-dependent PFK group I subfamily. Prokaryotic clade 'B1' sub-subfamily. Homotetramer. Mg(2+) serves as cofactor.

The protein localises to the cytoplasm. The catalysed reaction is beta-D-fructose 6-phosphate + ATP = beta-D-fructose 1,6-bisphosphate + ADP + H(+). Its pathway is carbohydrate degradation; glycolysis; D-glyceraldehyde 3-phosphate and glycerone phosphate from D-glucose: step 3/4. Its activity is regulated as follows. Allosterically activated by ADP and other diphosphonucleosides, and allosterically inhibited by phosphoenolpyruvate. Its function is as follows. Catalyzes the phosphorylation of D-fructose 6-phosphate to fructose 1,6-bisphosphate by ATP, the first committing step of glycolysis. The polypeptide is ATP-dependent 6-phosphofructokinase (Sulfurimonas denitrificans (strain ATCC 33889 / DSM 1251) (Thiomicrospira denitrificans (strain ATCC 33889 / DSM 1251))).